We begin with the raw amino-acid sequence, 36 residues long: Adenylate kinase (36 aa).

10–15 serves as a coordination point for ATP; that stretch reads GAGKGT. Positions 30–36 are NMP; sequence ATGDLFR. Residues Thr31 and Arg36 each coordinate AMP.

It belongs to the adenylate kinase family. In terms of assembly, monomer.

It localises to the cytoplasm. It catalyses the reaction AMP + ATP = 2 ADP. Its pathway is purine metabolism; AMP biosynthesis via salvage pathway; AMP from ADP: step 1/1. Functionally, catalyzes the reversible transfer of the terminal phosphate group between ATP and AMP. Plays an important role in cellular energy homeostasis and in adenine nucleotide metabolism. The polypeptide is Adenylate kinase (adk) (Streptomyces griseus).